A 1420-amino-acid polypeptide reads, in one-letter code: Mediator of RNA polymerase II transcription subunit 13 (1420 aa).

Phosphoserine occurs at positions 370, 375, and 425. A compositionally biased stretch (polar residues) spans 416–427; sequence TTVSNDLENSPL. The tract at residues 416–511 is disordered; the sequence is TTVSNDLENS…TNESNKSISD (96 aa). Residues 429-439 are compositionally biased toward basic and acidic residues; the sequence is TELEANGRSLE. Residues 440 to 453 show a composition bias toward polar residues; it reads KVNNSVSKTGSVDT. A compositionally biased stretch (basic and acidic residues) spans 454 to 484; that stretch reads LHNKEGTLEQREQNENLPSDKSDSMVDKELF. Residues 494–508 show a composition bias toward low complexity; it reads GDSNKSNSTNESNKS. Phosphothreonine is present on Thr601. At Ser608 the chain carries Phosphoserine; by PKA. Ser636 carries the post-translational modification Phosphoserine. The disordered stretch occupies residues 653–691; it reads LSSSEEEEDEEENGSSDEDLKSLNVRDDMKPSDNISTNT. The segment covering 655–669 has biased composition (acidic residues); that stretch reads SSEEEEDEEENGSSD. Residues 670-683 are compositionally biased toward basic and acidic residues; it reads EDLKSLNVRDDMKP. Ser748 is subject to Phosphoserine.

The protein belongs to the Mediator complex subunit 13 family. As to quaternary structure, component of the SRB8-11 complex which consists of SRB8, SSN2/SRB9, SSN3/SRB10 and SSN8/SRB11. The SRB8-11 complex associates with the Mediator complex. The SSN3/SRB10 and SSN8/SRB11 kinase-cyclin pair also associate with the RNA polymerase II holoenzyme. Phosphorylated. PKA-dependent phosphorylation at 'Ser-608' is enhanced by activation of the RAS signaling pathway.

The protein localises to the nucleus. In terms of biological role, component of the SRB8-11 complex. The SRB8-11 complex is a regulatory module of the Mediator complex which is itself involved in regulation of basal and activated RNA polymerase II-dependent transcription. The SRB8-11 complex may be involved in the transcriptional repression of a subset of genes regulated by Mediator. It may inhibit the association of the Mediator complex with RNA polymerase II to form the holoenzyme complex. The SRB8-11 complex phosphorylates the C-terminal domain (CTD) of the largest subunit of RNA polymerase II RPB1 at serines 2 and 5. The polypeptide is Mediator of RNA polymerase II transcription subunit 13 (SSN2) (Saccharomyces cerevisiae (strain ATCC 204508 / S288c) (Baker's yeast)).